Here is a 262-residue protein sequence, read N- to C-terminus: MSGQTTSEYIGHHLQFLKTGDSFWNVHIDTLFFSVLAAIIFLAVFRSVAKKATSGVPGKLQCMVEILVEWINGIVKENFHGPRNVVAPLALTIFCWVFIMNAIDLIPVDFLPQLAGLFGIHYLRAVPTADISATLGMSLCVFALILFYTVKSKGFGGLVKEYTLHPFNHWSLIPVNFVLESVTLLAKPISLAFRLFGNMYAGELIFILIAVMYSANAAIAALGIPLHLAWAIFHILIVTLQAFIFMMLTVVYLSIAYNKAEH.

5 consecutive transmembrane segments (helical) span residues 25-45 (NVHIDTLFFSVLAAIIFLAVF), 86-106 (VAPLALTIFCWVFIMNAIDLI), 130-150 (DISATLGMSLCVFALILFYTV), 204-226 (LIFILIAVMYSANAAIAALGIPL), and 240-260 (LQAFIFMMLTVVYLSIAYNKA).

This sequence belongs to the ATPase A chain family. F-type ATPases have 2 components, CF(1) - the catalytic core - and CF(0) - the membrane proton channel. CF(1) has five subunits: alpha(3), beta(3), gamma(1), delta(1), epsilon(1). CF(0) has three main subunits: a(1), b(2) and c(9-12). The alpha and beta chains form an alternating ring which encloses part of the gamma chain. CF(1) is attached to CF(0) by a central stalk formed by the gamma and epsilon chains, while a peripheral stalk is formed by the delta and b chains.

It is found in the cell inner membrane. Functionally, key component of the proton channel; it plays a direct role in the translocation of protons across the membrane. The polypeptide is ATP synthase subunit a (Mannheimia succiniciproducens (strain KCTC 0769BP / MBEL55E)).